The chain runs to 2753 residues: Maltase-glucoamylase (2753 aa).

The Cytoplasmic portion of the chain corresponds to 1–13; sequence MARKKLKKFTTLE. The chain crosses the membrane as a helical; Signal-anchor for type II membrane protein span at residues 14–34; that stretch reads IVLSVLLLVLFIISIVLIVLL. Residues 35-2753 are Lumenal-facing; the sequence is AKESLKSTAP…FTSLTWISTL (2719 aa). Positions 41–87 are disordered; it reads STAPDPGTTGTPDPGTTGTPDPGTTGTTHARTTGPPDPGTTGTTPVS. The span at 44-85 shows a compositional bias: low complexity; that stretch reads PDPGTTGTPDPGTTGTPDPGTTGTTHARTTGPPDPGTTGTTP. Residues 88–134 enclose the P-type 1 domain; that stretch reads AECPVVNELERINCIPDQPPTKATCDQRGCCWNPQGAVSVPWCYYSK. Intrachain disulfides connect C90–C118, C101–C117, and C112–C130. N135 carries N-linked (GlcNAc...) asparagine glycosylation. D289 provides a ligand contact to acarbose. N-linked (GlcNAc...) asparagine glycosylation occurs at N295. The segment at 356–737 is maltase; the sequence is PEQVVQEYLE…FRAHSRGDTV (382 aa). D413 contacts acarbose. Residues Y416 and Y425 each carry the sulfotyrosine modification. N-linked (GlcNAc...) asparagine glycans are attached at residues N457, N458, and N479. Catalysis depends on D529, which acts as the Nucleophile. E532 is an active-site residue. Acarbose is bound by residues R612 and D628. C659 and C670 are oxidised to a cystine. H686 lines the acarbose pocket. N-linked (GlcNAc...) asparagine glycosylation is found at N707, N749, N827, N885, N912, N977, N989, and N1255. Residues 954–1000 form the P-type 2 domain; it reads WSIKIRDEEKIDCYPDENGASAENCTARGCIWEASNSSGVPFCYFVN. Cystine bridges form between C966/C983 and C978/C996. The segment at 1221–1632 is glucoamylase; it reads TPELVTQQYT…MQKAHTEGVT (412 aa). Y1282 is modified (sulfotyrosine). N-linked (GlcNAc...) asparagine glycosylation is found at N1323, N1364, and N1388. The active-site Nucleophile is the D1420. E1423 is an active-site residue. D1526 functions as the Proton donor in the catalytic mechanism. Positions 1850–1896 constitute a P-type 3 domain; sequence WSIKIRDEEKIDCYPDENGDSAENCTARGCIWEASNSSGVPFCYFVN. 2 disulfides stabilise this stretch: C1862/C1879 and C1874/C1892. N2499, N2568, N2738, and N2743 each carry an N-linked (GlcNAc...) asparagine glycan.

This sequence belongs to the glycosyl hydrolase 31 family. In terms of assembly, monomer. In terms of processing, N- and O-glycosylated. Post-translationally, does not undergo intracellular or extracellular proteolytic cleavage. Sulfated. Broadly expressed. Highly expressed in small intestine. Expressed in granulocytes.

Its subcellular location is the apical cell membrane. It catalyses the reaction Hydrolysis of terminal, non-reducing (1-&gt;4)-linked alpha-D-glucose residues with release of alpha-D-glucose.. It carries out the reaction D-maltoheptaose + H2O = D-maltohexaose + alpha-D-glucose. The enzyme catalyses D-maltohexaose + H2O = D-maltopentaose + alpha-D-glucose. The catalysed reaction is D-maltopentaose + H2O = D-maltotetraose + alpha-D-glucose. It catalyses the reaction D-maltotetraose + H2O = D-maltotriose + alpha-D-glucose. It carries out the reaction D-maltotriose + H2O = D-maltose + alpha-D-glucose. The enzyme catalyses D-maltose + H2O = alpha-D-glucose + D-glucose. The catalysed reaction is nigerose + H2O = alpha-D-glucose + D-glucose. It catalyses the reaction kojibiose + H2O = alpha-D-glucose + D-glucose. It carries out the reaction isomaltose + H2O = alpha-D-glucose + D-glucose. The enzyme catalyses 6-O-alpha-D-glucopyranosyl-D-fructose + H2O = alpha-D-glucose + D-fructose. It functions in the pathway carbohydrate degradation. Its activity is regulated as follows. Down-regulated at high oligomaltose concentration as it occurs during the mealtime. Down-regulated by anti-diabetic drug acarbose. Alpha-(1,4) exo-glucosidase involved in breakdown of dietary starch oligosaccharides in small intestine. Cleaves the non-reducing alpha-(1,4)-linked glucose residue in linear dextrins with retention of anomeric center stereochemistry. Mainly hydrolyzes short length oligomaltoses having two to seven glucose residues. Can cleave alpha-(1,2), alpha-(1,3) and alpha-(1,6) glycosidic linkages with lower efficiency, whereas beta glycosidic linkages are usually not hydrolyzed. This is Maltase-glucoamylase from Homo sapiens (Human).